Here is a 396-residue protein sequence, read N- to C-terminus: 1-deoxy-D-xylulose 5-phosphate reductoisomerase (396 aa).

Residues Thr10, Gly11, Ser12, Ile13, Asn38, and Asn123 each coordinate NADPH. Lys124 is a binding site for 1-deoxy-D-xylulose 5-phosphate. Glu125 contacts NADPH. Asp149 is a Mn(2+) binding site. 1-deoxy-D-xylulose 5-phosphate contacts are provided by Ser150, Glu151, Ser185, and His208. Glu151 lines the Mn(2+) pocket. Gly214 serves as a coordination point for NADPH. Ser221, Asn226, Lys227, and Glu230 together coordinate 1-deoxy-D-xylulose 5-phosphate. A Mn(2+)-binding site is contributed by Glu230.

The protein belongs to the DXR family. Requires Mg(2+) as cofactor. The cofactor is Mn(2+).

The enzyme catalyses 2-C-methyl-D-erythritol 4-phosphate + NADP(+) = 1-deoxy-D-xylulose 5-phosphate + NADPH + H(+). It participates in isoprenoid biosynthesis; isopentenyl diphosphate biosynthesis via DXP pathway; isopentenyl diphosphate from 1-deoxy-D-xylulose 5-phosphate: step 1/6. Catalyzes the NADPH-dependent rearrangement and reduction of 1-deoxy-D-xylulose-5-phosphate (DXP) to 2-C-methyl-D-erythritol 4-phosphate (MEP). In Shewanella piezotolerans (strain WP3 / JCM 13877), this protein is 1-deoxy-D-xylulose 5-phosphate reductoisomerase.